The sequence spans 1305 residues: MSQEYTEDKEVTLKKLSNGRRLLEAVLIVVTILAAYLMVALVSFNPSDPSWSQTAWHEPIHNLGGSIGAWMADTLFSTFGVLAYAIPPIMVIFCWTAFRQRDASEYLDYFALSLRLIGTLALILTSCGLAALNIDDLYYFASGGVIGSLFSNAMLPWFNGVGATLTLLCIWVVGLTLFTGWSWLVIAEKIGAAVLGSLTFITNRSRREERYDDEDSYHDDDHADGRDITGQEKGVVSNKGVVSNNAVVGAGVAASSALAHGDDDVLFSAPSVTDSIVEHGSVVATGTETTDTKATDTNDEYDPLLSPLRATDYSVQDATSSPIADVAVEPVLNHDAAAIYGTTPVMTNTATPPLYSFELPEESLPIQTHAAPTERPEPKLGAWDMSPTPVSHSPFDFSAIQRPVGQLESRQPGSNQSGSHQIHSAQSSHISVGNTPYMNPGLDAQIDGLSTTSLTNKPVLASGTVAAATAAAAFMPAFTATSDSSSQIKQGIGPELPRPNPVRIPTRRELASFGIKLPSQRMAEQELRERDGDETQNPQMAASSYGTEITSDEDAALQQAILRKAFADQQSERYALSTLAEQSSITERSPAAEMPTTPSQVSDLEDEQALQEAELRQAFAAQQQHRYGATGDTDNAVDNIRSVDTSTAFTFSPIADLVDDSPREPLFTLSPYVDETDVDEPVQLEGKEESLLQDYPEQVPTYQPPVQQAHLGQSAPTQPSHTQSTYGQSTYGQSTYGQSTPAPVSQPVVTSASAISTSVTPTSIASLNTAPVSAAPVAPSPQPPAFSQPTAAMDSLIHPFLMRNDQPLQKPTTPLPTLDLLSSPPAEEEPVDMFALEQTARLVEARLGDYRVKAEVVGISPGPVITRFELDLAPGVKASRISNLSRDLARSLSAIAVRVVEVIPGKPYVGLELPNKHRQTVYLREVLDCAKFRENPSPLAIVLGKDIAGQPVVADLAKMPHLLVAGTTGSGKSVGVNAMILSILYKATPDDVRFIMIDPKMLELSVYEGIPHLLTGVVTDMKDAANALRWCVGEMERRYKLMSALGVRNLAGYNERVAQAEAMGRPIPDPFWKPSDSMDISPPMLVKLPYIVVMVDEFADLMMTVGKKVEELIARLAQKARAAGIHLVLATQRPSVDVITGLIKANIPTRIAFTVSSKIDSRTILDQGGAESLLGMGDMLYMAPNSSIPVRVHGAFVRDQEVHAVVNDWKARGRPQYIDSILSGGEEGEGGGLGLDSDEELDPLFDQAVNFVLEKRRASISGVQRQFRIGYNRAARIIEQMEAQQIVSTPGHNGNREVLAPPPHE.

A run of 5 helical transmembrane segments spans residues 22 to 42 (LLEA…VALV), 75 to 95 (LFST…IFCW), 110 to 130 (FALS…CGLA), 138 to 158 (YYFA…LPWF), and 167 to 187 (LLCI…LVIA). Topologically, residues 188–1305 (EKIGAAVLGS…REVLAPPPHE (1118 aa)) are cytoplasmic. Disordered stretches follow at residues 405 to 434 (GQLE…SVGN), 484 to 503 (SSSQ…NPVR), 518 to 550 (PSQR…TEIT), 578 to 602 (TLAE…SQVS), and 707 to 745 (QQAH…APVS). The segment covering 416–431 (QSGSHQIHSAQSSHIS) has biased composition (low complexity). A compositionally biased stretch (basic and acidic residues) spans 523-533 (AEQELRERDGD). Over residues 535-549 (TQNPQMAASSYGTEI) the composition is skewed to polar residues. Residues 707-743 (QQAHLGQSAPTQPSHTQSTYGQSTYGQSTYGQSTPAP) show a composition bias toward polar residues. In terms of domain architecture, FtsK spans 949-1162 (GQPVVADLAK…FTVSSKIDSR (214 aa)). 969–974 (GSGKSV) contacts ATP. The segment at 1286–1305 (IVSTPGHNGNREVLAPPPHE) is disordered.

The protein belongs to the FtsK/SpoIIIE/SftA family. As to quaternary structure, homohexamer. Forms a ring that surrounds DNA.

It is found in the cell inner membrane. Its function is as follows. Essential cell division protein that coordinates cell division and chromosome segregation. The N-terminus is involved in assembly of the cell-division machinery. The C-terminus functions as a DNA motor that moves dsDNA in an ATP-dependent manner towards the dif recombination site, which is located within the replication terminus region. Translocation stops specifically at Xer-dif sites, where FtsK interacts with the Xer recombinase, allowing activation of chromosome unlinking by recombination. FtsK orienting polar sequences (KOPS) guide the direction of DNA translocation. FtsK can remove proteins from DNA as it translocates, but translocation stops specifically at XerCD-dif site, thereby preventing removal of XerC and XerD from dif. This chain is DNA translocase FtsK (ftsK), found in Yersinia pestis.